The primary structure comprises 242 residues: MSNPRSLEEEKYDMSGARLALILCVTKAREGSEEDLDALEHMFRQLRFESTMKRDPTAEQFQEELEKFQQAIDSREDPVSCAFVVLMAHGREGFLKGEDGEMVKLENLFEALNNKNCQALRAKPKVYIIQACRGEQRDPGETVGGDEIVMVIKDSPQTIPTYTDALHVYSTVEGYIAYRHDQKGSCFIQTLVDVFTKRKGHILELLTEVTRRMAEAELVQEGKARKTNPEIQSTLRKRLYLQ.

A propeptide spanning residues 1–5 (MSNPR) is cleaved from the precursor. Residues histidine 89 and cysteine 132 contribute to the active site. Residues 147–152 (EIVMVI) constitute a propeptide that is removed on maturation.

This sequence belongs to the peptidase C14A family. As to quaternary structure, heterodimer of a large and a small subunit, both processed from the precursor; the mature active form is a p17/p10 dimer and the intermediate form a p20/p8 dimer. Maturation by proteolytic processing appears to be a two-step process. The precursor is processed by KLK7 to yield the p20/p8 intermediate form which acts on the precursor to yield the p17/p10 mature form. Initially, cleavage between Ile-152 and Lys-153 has been proposed to yield the large and small subunits of the active enzyme. Expressed in keratinocytes of adult skin suprabasal layers (from spinous layers to the stratum granulosum and stratum corneum) (at protein level). Expressed in keratinocytes of hair shaft and sebaceous glands (at protein level). In psoriatic skin only expressed at very low levels. The p17/10 mature form is expressed in epidermis stratum corneum, the p20/p8 intermediate form in epidermis upper granular cells of the stratum granulosum.

The protein localises to the cytoplasm. The protein resides in the nucleus. With respect to regulation, inhibited by caspase-1 inhibitor YVAD-FMK and the pan-caspase inhibitor VAD-FMK. Non-apoptotic caspase involved in epidermal differentiation. Is the predominant caspase in epidermal stratum corneum. Seems to play a role in keratinocyte differentiation and is required for cornification. Regulates maturation of the epidermis by proteolytically processing filaggrin. In vitro has a preference for the substrate [WY]-X-X-D motif and is active on the synthetic caspase substrate WEHD-ACF. Involved in processing of prosaposin in the epidermis. May be involved in retinal pigment epithelium cell barrier function. Involved in DNA degradation in differentiated keratinocytes probably by cleaving DFFA/ICAD leading to liberation of DFFB/CAD. The polypeptide is Caspase-14 (CASP14) (Homo sapiens (Human)).